We begin with the raw amino-acid sequence, 343 residues long: Outer envelope pore protein 37, chloroplastic (343 aa).

Composition is skewed to polar residues over residues 1–11 (MADPSSQNPNL) and 23–43 (THQI…PCST). A disordered region spans residues 1–43 (MADPSSQNPNLATPPPPSSPSPTHQIQSGTSELSPPSRPPCST). The N-terminal 73 residues, 1–73 (MADPSSQNPN…DSLLFLNKVS (73 aa)), are a transit peptide targeting the chloroplast. Residues 74-76 (CKL) are Cytoplasmic-facing. The chain crosses the membrane as a beta stranded span at residues 77-86 (FDNLAKLKLS). Over 87–103 (FQNNSQREISQPQVSFT) the chain is Chloroplast intermembrane. A beta stranded transmembrane segment spans residues 104–113 (SKHVSVLYDV). Topologically, residues 114–129 (EEKNTFIKSTLDVHPR) are cytoplasmic. A beta stranded membrane pass occupies residues 130 to 137 (LQLRALHN). Residues 138-154 (VKAQQGEVAMEANLTEP) are Chloroplast intermembrane-facing. A beta stranded transmembrane segment spans residues 155-164 (GYSLELSSPV). Topologically, residues 165–169 (PIGYP) are cytoplasmic. A beta stranded membrane pass occupies residues 170 to 178 (RATLKFPLG). The Chloroplast intermembrane portion of the chain corresponds to 179 to 219 (EISLQEKDEEEEEKQKRTLSVNGILKRQVMNGVCTALYTDE). The beta stranded transmembrane segment at 220–228 (ELRLRYAYK) threads the bilayer. At 229–230 (DD) the chain is on the cytoplasmic side. The beta stranded transmembrane segment at 231-240 (ALSFIPSISL) threads the bilayer. A topological domain (chloroplast intermembrane) is located at residue proline 241. Residues 242–250 (SNAASFAFK) form a beta stranded membrane-spanning segment. Over 251–257 (RRFSPSD) the chain is Cytoplasmic. The chain crosses the membrane as a beta stranded span at residues 258 to 267 (KLSYWYNFDS). Residues 268–269 (NM) are Chloroplast intermembrane-facing. The beta stranded transmembrane segment at 270 to 279 (WSAVYKRTYG) threads the bilayer. The Cytoplasmic segment spans residues 280–286 (KDYKLKA). The chain crosses the membrane as a beta stranded span at residues 287-296 (GYDSDVRLGW). Topologically, residues 297 to 316 (ASLWVGDEAGKVKTTPMKMK) are chloroplast intermembrane. The chain crosses the membrane as a beta stranded span at residues 317–326 (VQFMLQVPQD). Topologically, residues 327–343 (DIKSSVLMFRVKKRWDI) are cytoplasmic.

The protein belongs to the plastid outer envelope porin OEP37 (TC 1.B.47) family. Forms an hourglass-shaped multimeric complex. Ubiquitously expressed at low levels. Mostly present in cotyledons, and accumulates in seedlings and embryos.

It is found in the plastid. The protein localises to the chloroplast outer membrane. Voltage-dependent peptide-sensitive high conductance rectifying cation channel with a strong affinity for TIC32 that is imported into the chloroplast. Conductance is pH-dependent decreasing with decreasing pH values. The polypeptide is Outer envelope pore protein 37, chloroplastic (OEP37) (Arabidopsis thaliana (Mouse-ear cress)).